We begin with the raw amino-acid sequence, 778 residues long: MDKNKIMGLTQREVKERQAEGLVNDFTASASTSTWQIVKRNVFTLFNALNFAIALALAFVQAWSNLVFFAVICFNAFSGIVTELRAKHMVDKLNLMTKEKVKTIRDGQEVALNPEELVLGDVIRLSAGEQIPSDALVLEGFAEVNEAMLTGESDLVQKEVDGLLLSGSFLASGSVLSQVHHVGADNYAAKLMLEAKTVKPINSRIMKSLDKLAGFTGKIIIPFGLALLLEALLLKGLPLKSSVVNSSTALLGMLPKGIALLTITSLLTAVIKLGLKKVLVQEMYSVETLARVDMLCLDKTGTITQGKMQVEAVLPLTETYGEEAIASILTSYMAHSEDKNPTAQAIRQRFVGDVAYPMISNLPFSSDRKWGAMELEGLGTVFLGAPEMLLDSEVPEAREALERGSRVLVLALSQEKLDHHKPQKPSDIQALALLEILDPIREGAAETLDYLRSQEVGLKIISGDNPVTVSSIAQKAGFADYHSYVDCSKITDEELMAMAEETAIFGRVSPHQKKLIIQTLKKAGHTTAMTGDGVNDILALREADCSIVMAEGDPATRQIANLVLLNSDFNDVPEILFEGRRVVNNIAHIAPIFLIKTIYSFLLAVICIASALLGRSEWILIFPFIPIQITMIDQFVEGFPPFVLTFERNIKPVEQNFLRKSMLRALPSALMVVFSVLFVKMFGASQGWSELEISTLLYYLLGSIGFLSVFRACMPFTLWRVLLIVWSVGGFLATALFPRIQKLLEISTLTEQTLPVYGVMMLVFTVIFILTSRYQAKK.

Residues 1 to 37 (MDKNKIMGLTQREVKERQAEGLVNDFTASASTSTWQI) lie on the Cytoplasmic side of the membrane. A helical membrane pass occupies residues 38–57 (VKRNVFTLFNALNFAIALAL). Residues 58 to 64 (AFVQAWS) lie on the Extracellular side of the membrane. The helical transmembrane segment at 65–84 (NLVFFAVICFNAFSGIVTEL) threads the bilayer. The Cytoplasmic segment spans residues 85–209 (RAKHMVDKLN…PINSRIMKSL (125 aa)). A helical membrane pass occupies residues 210 to 229 (DKLAGFTGKIIIPFGLALLL). At 230–242 (EALLLKGLPLKSS) the chain is on the extracellular side. Residues 243–260 (VVNSSTALLGMLPKGIAL) form a helical membrane-spanning segment. The Cytoplasmic segment spans residues 261-586 (LTITSLLTAV…FEGRRVVNNI (326 aa)). The active-site 4-aspartylphosphate intermediate is D298. Mg(2+) is bound by residues D532 and D536. The chain crosses the membrane as a helical span at residues 587–606 (AHIAPIFLIKTIYSFLLAVI). Topologically, residues 607–624 (CIASALLGRSEWILIFPF) are extracellular. Residues 625-645 (IPIQITMIDQFVEGFPPFVLT) traverse the membrane as a helical segment. Topologically, residues 646 to 663 (FERNIKPVEQNFLRKSML) are cytoplasmic. Residues 664–684 (RALPSALMVVFSVLFVKMFGA) traverse the membrane as a helical segment. Residues 685–689 (SQGWS) are Extracellular-facing. Residues 690–708 (ELEISTLLYYLLGSIGFLS) traverse the membrane as a helical segment. Residues 709–716 (VFRACMPF) lie on the Cytoplasmic side of the membrane. A helical membrane pass occupies residues 717–739 (TLWRVLLIVWSVGGFLATALFPR). Over 740 to 757 (IQKLLEISTLTEQTLPVY) the chain is Extracellular. A helical membrane pass occupies residues 758-777 (GVMMLVFTVIFILTSRYQAK). K778 is a topological domain (cytoplasmic).

It belongs to the cation transport ATPase (P-type) (TC 3.A.3) family.

Its subcellular location is the cell membrane. It carries out the reaction ATP + H2O = ADP + phosphate + H(+). The chain is Probable cation-transporting ATPase exp7 (exp7) from Streptococcus pneumoniae serotype 4 (strain ATCC BAA-334 / TIGR4).